Consider the following 1377-residue polypeptide: DNA-directed RNA polymerase subunit beta (1377 aa).

It belongs to the RNA polymerase beta chain family. As to quaternary structure, the RNAP catalytic core consists of 2 alpha, 1 beta, 1 beta' and 1 omega subunit. When a sigma factor is associated with the core the holoenzyme is formed, which can initiate transcription.

It carries out the reaction RNA(n) + a ribonucleoside 5'-triphosphate = RNA(n+1) + diphosphate. Functionally, DNA-dependent RNA polymerase catalyzes the transcription of DNA into RNA using the four ribonucleoside triphosphates as substrates. The sequence is that of DNA-directed RNA polymerase subunit beta from Brucella abortus (strain S19).